Here is a 265-residue protein sequence, read N- to C-terminus: 3-methyl-2-oxobutanoate hydroxymethyltransferase (265 aa).

Residues Asp43 and Asp82 each coordinate Mg(2+). Residues 43–44 (DS), Asp82, and Lys111 each bind 3-methyl-2-oxobutanoate. Glu113 is a Mg(2+) binding site. The active-site Proton acceptor is the Glu180.

The protein belongs to the PanB family. In terms of assembly, homodecamer; pentamer of dimers. Mg(2+) is required as a cofactor.

It is found in the cytoplasm. The enzyme catalyses 3-methyl-2-oxobutanoate + (6R)-5,10-methylene-5,6,7,8-tetrahydrofolate + H2O = 2-dehydropantoate + (6S)-5,6,7,8-tetrahydrofolate. Its pathway is cofactor biosynthesis; (R)-pantothenate biosynthesis; (R)-pantoate from 3-methyl-2-oxobutanoate: step 1/2. Functionally, catalyzes the reversible reaction in which hydroxymethyl group from 5,10-methylenetetrahydrofolate is transferred onto alpha-ketoisovalerate to form ketopantoate. This Francisella tularensis subsp. novicida (strain U112) protein is 3-methyl-2-oxobutanoate hydroxymethyltransferase.